Here is a 467-residue protein sequence, read N- to C-terminus: Uronate isomerase (467 aa).

The protein belongs to the metallo-dependent hydrolases superfamily. Uronate isomerase family.

It catalyses the reaction D-glucuronate = D-fructuronate. The enzyme catalyses aldehydo-D-galacturonate = keto-D-tagaturonate. It functions in the pathway carbohydrate metabolism; pentose and glucuronate interconversion. This is Uronate isomerase from Streptococcus uberis (strain ATCC BAA-854 / 0140J).